Here is a 421-residue protein sequence, read N- to C-terminus: Zinc metalloproteinase-disintegrin-like lachestatin-2 (421 aa).

One can recognise a Peptidase M12B domain in the interval 10-206; that stretch reads KYVKLVLVAD…DMPQCILEKP (197 aa). 3 cysteine pairs are disulfide-bonded: C121/C201, C161/C185, and C163/C168. H146 provides a ligand contact to Zn(2+). Residue E147 is part of the active site. Zn(2+)-binding residues include H150 and H156. The region spanning 214–299 is the Disintegrin domain; the sequence is PPVCGNYFVE…AECTDRFQRN (86 aa). 6 residues coordinate Ca(2+): V216, N219, F221, E223, E226, and D229. 14 disulfide bridges follow: C217/C246, C228/C241, C230/C236, C240/C263, C254/C260, C259/C285, C272/C292, C279/C310, C303/C315, C322/C372, C337/C383, C350/C360, C367/C409, and C403/C414. The short motif at 278–280 is the D/ECD-tripeptide element; it reads ECD. 5 residues coordinate Ca(2+): D280, M281, D283, D294, and R295. Residue N312 is glycosylated (N-linked (GlcNAc...) asparagine).

It belongs to the venom metalloproteinase (M12B) family. P-III subfamily. P-IIIc sub-subfamily. In terms of assembly, homodimer; disulfide-linked. Requires Zn(2+) as cofactor. As to expression, expressed by the venom gland.

It is found in the secreted. In terms of biological role, snake venom zinc metalloprotease that induces apoptosis in vascular endothelial cells (VEC), without degrading the extracellular matrix (it cannot cleave collagen) or inhibiting adhesion of VEC. Has also fibrinogenolytic and hemorrhagic activities. The protein is Zinc metalloproteinase-disintegrin-like lachestatin-2 of Lachesis muta rhombeata (Bushmaster).